Here is a 172-residue protein sequence, read N- to C-terminus: Shikimate kinase (172 aa).

14–19 (GAGKST) contacts ATP. S18 contacts Mg(2+). Substrate is bound by residues D36, R60, and G82. R120 is a binding site for ATP. A substrate-binding site is contributed by R139. ATP is bound at residue Q156.

It belongs to the shikimate kinase family. As to quaternary structure, monomer. Mg(2+) is required as a cofactor.

Its subcellular location is the cytoplasm. The catalysed reaction is shikimate + ATP = 3-phosphoshikimate + ADP + H(+). Its pathway is metabolic intermediate biosynthesis; chorismate biosynthesis; chorismate from D-erythrose 4-phosphate and phosphoenolpyruvate: step 5/7. Its function is as follows. Catalyzes the specific phosphorylation of the 3-hydroxyl group of shikimic acid using ATP as a cosubstrate. This is Shikimate kinase from Vibrio parahaemolyticus serotype O3:K6 (strain RIMD 2210633).